A 513-amino-acid chain; its full sequence is Sugar transport protein 7 (513 aa).

Over 1-26 (MAGGSFGPTGVAKERAEQYQGKVTSY) the chain is Cytoplasmic. 12 helical membrane passes run 27-47 (VIIA…DIGI), 84-104 (GLAA…LVAS), 121-141 (ISFL…MLLA), 144-164 (IMLG…LSEV), 171-191 (GGLN…ANMV), 205-225 (LSLG…YFLP), 286-306 (LVMA…SILF), 324-344 (YSSA…IGLV), 351-371 (ALLI…AVIL), 387-407 (VIVV…WGPL), 427-447 (ITVA…LGLL), and 452-472 (FGIF…VYFL). The Cytoplasmic portion of the chain corresponds to 473 to 513 (LPETKGVPIEEMTLLWSKHWFWKKVLPDATNLEDESKNVSV).

The protein belongs to the major facilitator superfamily. Sugar transporter (TC 2.A.1.1) family.

It localises to the cell membrane. Its function is as follows. Mediates an active uptake of hexoses, probably by sugar/hydrogen symport. The polypeptide is Sugar transport protein 7 (STP7) (Arabidopsis thaliana (Mouse-ear cress)).